Here is a 1179-residue protein sequence, read N- to C-terminus: MSKPPFTHLHVHTQYSLLDGAARLKDMFDACNEMGMSHIAMSDHGNLHGAYDFFHSAKKAGVTPIIGIEAYVAPESRRNKRKIQWGQPHQKRDDVSGSGGYTHKTMWATNSKGLHNLFRLSSDAYAEGWLQKWPRMDKETISQWSEGIVASTGCPSGEVQTRLRLGHFDEALKAAADYQDIFGKDRYFLELMDHGIEIEHRVRDGLLEIGRKLGIPPLVTNDSHYTYAHEATAHDALLCIQTGKNLSDPDRFRFDGTGYYLKSTDEMYAIDSSDAWQEGCANTRLIAEMIDTTGMFEKRDLMPKFDIPEGFTEITWFQEEVRRGMERRFPGGVPEDRQKQAEYEMDVIIQMGFPGYFLVVADFIMWAKNQGIAVGPGRGSAAGSIVAYAMGITDLDPIPHGLIFERFLNPERVSMPDVDIDFDERRRVEVIRYVTEKYGADKVAMIGTYGKIKAKNAIKDSARVLGYPYAMGDRLTKAMPADVLGKGIDLNGITDPTHPRYSEAGEIRSMYESEPDVKKVIDTAKGVEGLVRQMGVHAAGVIMSSEPIVDHAPIWVRHTDGVTITQWDYPQCESLGLLKMDFLGLRNLTIMDDAVKMVKSNKGIDLDLLSLPLDDPTTFELLQRGDTLGVFQFDGGPMRSLLRLMKPDNFEDISAVSALYRPGPMGMDSHTNYALRKNGLQEITPIHKELEEPLQEVLAVTYGLIVYQEQVQKAAQIIAGYSLGEADILRRVMGKKKPDELAKNFVLFQAGARKNGYSDEAIQALWDVLVPFAGYAFNKAHSAAYGLVSYWTGYLKANYPAEYMAALLTSVKDDKDKSAVYLNECRRMGIKVLPPNVNESMSNFAAQGDDVILFGLSAVRNVGTNVVESIIKCRKAKGKYASFPDYLDKVEAVVCNKRTTESLIKAGAFDEMGHTRKGLTAQYEPMIDNVVAVKRKEAEGQFDLFGGMGDEQSDEPGFGLDVVFGEDEWDKTYLLAQEREMLGLYVSDHPLFGLEHVLSDKADAGISQLTGGDFGDGAVVTIGGIISGLQRKMTKQGNAWAIATVEDLAGSLECMFFPATYQLVSTQLVEDAVVFVKGRLDKREDVPRLVAMELMIPDLSNAGTNAPVVLTIPATRITPPMVSRLGEILTHHRGDSEVRIKLQGPTKTTVLRLDRHRVKPDPALFGDLKVLLGPSCLAG.

The interval 77–99 (RRNKRKIQWGQPHQKRDDVSGSG) is disordered.

The protein belongs to the DNA polymerase type-C family. DnaE subfamily. In terms of assembly, DNA polymerase III contains a core (composed of alpha, epsilon and theta chains) that associates with a tau subunit. This core dimerizes to form the PolIII' complex. PolIII' associates with the gamma complex (composed of gamma, delta, delta', psi and chi chains) and with the beta chain to form the complete DNA polymerase III complex.

The protein resides in the cytoplasm. It catalyses the reaction DNA(n) + a 2'-deoxyribonucleoside 5'-triphosphate = DNA(n+1) + diphosphate. DNA polymerase III is a complex, multichain enzyme responsible for most of the replicative synthesis in bacteria. This DNA polymerase also exhibits 3' to 5' exonuclease activity. The alpha chain is the DNA polymerase. The protein is DNA polymerase III subunit alpha (dnaE) of Streptomyces coelicolor (strain ATCC BAA-471 / A3(2) / M145).